Here is a 338-residue protein sequence, read N- to C-terminus: Lipoate-protein ligase A (338 aa).

Residues 29–216 (PATQRVLFLW…AFFAHYGERV (188 aa)) form the BPL/LPL catalytic domain. ATP contacts are provided by residues R71, 76–79 (GAVF), and K134. K134 lines the (R)-lipoate pocket.

The protein belongs to the LplA family. As to quaternary structure, monomer.

It localises to the cytoplasm. It carries out the reaction L-lysyl-[lipoyl-carrier protein] + (R)-lipoate + ATP = N(6)-[(R)-lipoyl]-L-lysyl-[lipoyl-carrier protein] + AMP + diphosphate + H(+). It functions in the pathway protein modification; protein lipoylation via exogenous pathway; protein N(6)-(lipoyl)lysine from lipoate: step 1/2. Its pathway is protein modification; protein lipoylation via exogenous pathway; protein N(6)-(lipoyl)lysine from lipoate: step 2/2. Catalyzes both the ATP-dependent activation of exogenously supplied lipoate to lipoyl-AMP and the transfer of the activated lipoyl onto the lipoyl domains of lipoate-dependent enzymes. The chain is Lipoate-protein ligase A from Escherichia coli O9:H4 (strain HS).